Here is a 511-residue protein sequence, read N- to C-terminus: Glutamate/gamma-aminobutyrate antiporter (511 aa).

Residues 1–13 (MATSVQTGKAKQL) are Cytoplasmic-facing. Residues 14-36 (TLLGFFAITASMVMAVYEYPTFA) traverse the membrane as a helical segment. Residues 37-40 (TSGF) are Periplasmic-facing. Residues 41 to 64 (SLVFFLLLGGILWFIPVGLCAAEM) form a helical membrane-spanning segment. At 65-85 (ATVDGWEEGGVFAWVSNTLGP) the chain is on the cytoplasmic side. The chain crosses the membrane as a helical span at residues 86–112 (RWGFAAISFGYLQIAIGFIPMLYFVLG). The Periplasmic portion of the chain corresponds to 113-126 (ALSYILKWPALNED). The helical transmembrane segment at 127-147 (PITKTIAALIILWALALTQFG) threads the bilayer. Topologically, residues 148–151 (GTKY) are cytoplasmic. Residues 152 to 180 (TARIAKVGFFAGILLPAFILIALAAIYLH) traverse the membrane as a helical segment. Residues 181 to 201 (SGAPVAIEMDSKTFFPDFSKV) are Periplasmic-facing. A helical transmembrane segment spans residues 202-225 (GTLVVFVAFILSYMGVEASATHVN). The Cytoplasmic segment spans residues 226–229 (EMSN). Residues 230–259 (PGRDYPLAMLLLMVAAICLSSVGGLSIAMV) traverse the membrane as a helical segment. At 260 to 288 (IPGNEINLSAGVMQTFTVLMSHVAPEIEW) the chain is on the periplasmic side. A helical transmembrane segment spans residues 289–322 (TVRVISALLLLGVLAEIASWIVGPSRGMYVTAQK). At 323–337 (NLLPAAFAKMNKNGV) the chain is on the cytoplasmic side. A helical transmembrane segment spans residues 338-359 (PVTLVISQLVITSIALIILTNT). The Periplasmic portion of the chain corresponds to 360–362 (GGG). The helical transmembrane segment at 363-396 (NNMSFLIALALTVVIYLCAYFMLFIGYIVLVLKH) threads the bilayer. At 397-409 (PDLKRTFNIPGGK) the chain is on the cytoplasmic side. The chain crosses the membrane as a helical span at residues 410 to 430 (GVKLVVAIVGLLTSIMAFIVS). Over 431–443 (FLPPDNIQGDSTD) the chain is Periplasmic. The chain crosses the membrane as a helical span at residues 444–467 (MYVELLVVSFLVVLALPFILYAVH). Over 468–511 (DRKGKANTGVTLEPINSQNAPKGHFFLHPRARSPHYIVMNDKKH) the chain is Cytoplasmic.

It belongs to the amino acid-polyamine-organocation (APC) superfamily. Glutamate:GABA antiporter (GGA) (TC 2.A.3.7) family. In terms of assembly, monomer.

The protein localises to the cell inner membrane. The enzyme catalyses 4-aminobutanoate(in) + L-glutamate(out) = 4-aminobutanoate(out) + L-glutamate(in). Its activity is regulated as follows. Shows pH-dependent activity. The Glu/GABA transport activity is robust at pH 4.5 and rapidly decreases with increasing pH, with no detectable activity at pH 6.5 or above. The Glu analog L-trans-pyrrolidine-2,4-dicarboxylic acid (L-PDC) blocks the uptake of glutamate by selective inhibition. Involved in glutaminase-dependent acid resistance. Exchanges extracellular glutamate (Glu) for intracellular gamma-aminobutyric acid (GABA) under acidic conditions. The protonation states of substrates are crucial for transport. Selectively transports Glu with no net charge and GABA with a positive charge. Also efficiently transports glutamine and, to a smaller extent, methionine and leucine. When the extracellular pH drops below 2.5, can import L-glutamine and export either glutamate or GABA. The ability to survive the extremely acidic conditions of the stomach is essential for successful colonization of the host by commensal and pathogenic bacteria. The sequence is that of Glutamate/gamma-aminobutyrate antiporter from Escherichia coli (strain K12).